Consider the following 380-residue polypeptide: Cytochrome b (380 aa).

4 helical membrane-spanning segments follow: residues Phe34–Met54, Trp78–Ile99, Trp114–Leu134, and Phe179–Thr199. Residues His84 and His98 each contribute to the heme b site. 2 residues coordinate heme b: His183 and His197. His202 lines the a ubiquinone pocket. Helical transmembrane passes span Leu227–Ser247, Leu289–His309, Leu321–Ser341, and Phe348–Pro368.

It belongs to the cytochrome b family. The cytochrome bc1 complex contains 11 subunits: 3 respiratory subunits (MT-CYB, CYC1 and UQCRFS1), 2 core proteins (UQCRC1 and UQCRC2) and 6 low-molecular weight proteins (UQCRH/QCR6, UQCRB/QCR7, UQCRQ/QCR8, UQCR10/QCR9, UQCR11/QCR10 and a cleavage product of UQCRFS1). This cytochrome bc1 complex then forms a dimer. It depends on heme b as a cofactor.

It is found in the mitochondrion inner membrane. Its function is as follows. Component of the ubiquinol-cytochrome c reductase complex (complex III or cytochrome b-c1 complex) that is part of the mitochondrial respiratory chain. The b-c1 complex mediates electron transfer from ubiquinol to cytochrome c. Contributes to the generation of a proton gradient across the mitochondrial membrane that is then used for ATP synthesis. This is Cytochrome b (MT-CYB) from Fregetta tropica (Black-bellied storm-petrel).